A 324-amino-acid polypeptide reads, in one-letter code: Cytochrome f (324 aa).

The first 30 residues, 1–30 (MNMRFSPKALVRQLGRLSLVACLSLGLLGA), serve as a signal peptide directing secretion. 4 residues coordinate heme: Y42, C62, C65, and H66. A helical membrane pass occupies residues 290-310 (VLGVIAFFFAVMLAQIMLVLK).

The protein belongs to the cytochrome f family. In terms of assembly, the 4 large subunits of the cytochrome b6-f complex are cytochrome b6, subunit IV (17 kDa polypeptide, PetD), cytochrome f and the Rieske protein, while the 4 small subunits are PetG, PetL, PetM and PetN. The complex functions as a dimer. Heme serves as cofactor.

It localises to the cellular thylakoid membrane. Its function is as follows. Component of the cytochrome b6-f complex, which mediates electron transfer between photosystem II (PSII) and photosystem I (PSI), cyclic electron flow around PSI, and state transitions. In Synechococcus elongatus (strain ATCC 33912 / PCC 7942 / FACHB-805) (Anacystis nidulans R2), this protein is Cytochrome f.